A 389-amino-acid polypeptide reads, in one-letter code: Formate-dependent phosphoribosylglycinamide formyltransferase (389 aa).

Residues 15–16 and glutamate 75 each bind N(1)-(5-phospho-beta-D-ribosyl)glycinamide; that span reads EL. ATP contacts are provided by residues arginine 107, lysine 148, 153–158, 188–191, and glutamate 196; these read SSGKGQ and EEFL. Residues 112–302 enclose the ATP-grasp domain; the sequence is NLAAGELGLR…EFDLHLRAVL (191 aa). 2 residues coordinate Mg(2+): glutamate 261 and glutamate 273. N(1)-(5-phospho-beta-D-ribosyl)glycinamide contacts are provided by residues aspartate 280, lysine 350, and 357 to 358; that span reads RR.

The protein belongs to the PurK/PurT family. In terms of assembly, homodimer.

The catalysed reaction is N(1)-(5-phospho-beta-D-ribosyl)glycinamide + formate + ATP = N(2)-formyl-N(1)-(5-phospho-beta-D-ribosyl)glycinamide + ADP + phosphate + H(+). The protein operates within purine metabolism; IMP biosynthesis via de novo pathway; N(2)-formyl-N(1)-(5-phospho-D-ribosyl)glycinamide from N(1)-(5-phospho-D-ribosyl)glycinamide (formate route): step 1/1. Involved in the de novo purine biosynthesis. Catalyzes the transfer of formate to 5-phospho-ribosyl-glycinamide (GAR), producing 5-phospho-ribosyl-N-formylglycinamide (FGAR). Formate is provided by PurU via hydrolysis of 10-formyl-tetrahydrofolate. In Synechococcus sp. (strain CC9311), this protein is Formate-dependent phosphoribosylglycinamide formyltransferase.